The primary structure comprises 681 residues: Phenylalanine--tRNA ligase beta subunit (681 aa).

In terms of domain architecture, B5 spans 288–363 (PARETVLLRP…RIHGYDQIPE (76 aa)). Mg(2+) is bound by residues Asp-341, Asp-347, Glu-350, and Glu-351. The FDX-ACB domain maps to 586-681 (SSFPSIQRDL…EKQLEAVLLR (96 aa)).

The protein belongs to the phenylalanyl-tRNA synthetase beta subunit family. Type 1 subfamily. In terms of assembly, tetramer of two alpha and two beta subunits. Mg(2+) serves as cofactor.

The protein localises to the cytoplasm. The catalysed reaction is tRNA(Phe) + L-phenylalanine + ATP = L-phenylalanyl-tRNA(Phe) + AMP + diphosphate + H(+). The sequence is that of Phenylalanine--tRNA ligase beta subunit from Rhodopirellula baltica (strain DSM 10527 / NCIMB 13988 / SH1).